A 344-amino-acid chain; its full sequence is Follistatin (344 aa).

The first 29 residues, 1–29 (MVCARHQPGGLCLLLLLLCQFMEDRSAQA), serve as a signal peptide directing secretion. The region spanning 30–103 (GNCWLRQAKN…TCENVDCGPG (74 aa)) is the TB domain. Disulfide bonds link C32-C55, C42-C88, C56-C91, C95-C106, C100-C116, C118-C150, C122-C143, C132-C164, C168-C179, C173-C189, C192-C225, C196-C218, C207-C239, C245-C256, C250-C267, C270-C302, C274-C295, and C284-C316. Residues 94-117 (TCENVDCGPGKKCRMNKKNKPRCV) form the Follistatin-like 1 domain. Residues 112 to 166 (NKPRCVCAPDCSNITWKGPVCGLDGKTYRNECALLKARCKEQPELEVQYQGKCKK) form the Kazal-like 1 domain. N124 is a glycosylation site (N-linked (GlcNAc...) asparagine). The 24-residue stretch at 167–190 (TCRDVFCPGSSTCVVDQTNNAYCV) folds into the Follistatin-like 2 domain. Residues 186–241 (NAYCVTCNRICPEPSSSEQYLCGNDGVTYSSACHLRKATCLLGRSIGLAYEGKCIK) enclose the Kazal-like 2 domain. In terms of domain architecture, Follistatin-like 3 spans 244–268 (SCEDIQCGGGKKCLWDSKVGRGRCS). The 55-residue stretch at 264-318 (RGRCSLCDELCPDSKSDEPVCASDNATYASECAMKEAACSSGVLLEVKHSGSCNS) folds into the Kazal-like 3 domain. Residue N288 is glycosylated (N-linked (GlcNAc...) asparagine). Residues 315 to 344 (SCNSISEETEEEEEEEDQDYSFPISSILEW) are disordered. A compositionally biased stretch (acidic residues) spans 321-333 (EETEEEEEEEDQD).

As to quaternary structure, interacts with GDF11. Interacts with activin A/INHBA. Interacts with myostatin/MSTN.

It is found in the secreted. Its subcellular location is the nucleus. It localises to the nucleolus. In terms of biological role, multifunctional regulatory protein whose primary function is to antagonize members of the transforming growth factor beta (TGF-beta) superfamily including activin, myostatin, GDF11 or bone morphogenetic proteins (BMPs). Mechanistically, binds to these ligands in the extracellular space, blocking their type II receptor-binding site to inhibit downstream signaling. Plays an essential role in muscle fiber formation and growth both by preventing the repressive effects of myostatin and through SMAD3/AKT/mTOR signaling independently of myostatin. Also promotes neural differentiation by antagonizing the action BMP4. Acts as a specific inhibitor of the biosynthesis and secretion of pituitary follicle stimulating hormone (FSH) by sequestering activin A/INHBA. On the other hand, translocates into the nucleus where it down-regulates rRNA synthesis and ribosome biogenesis to maintain cellular energy homeostasis by binding to rDNA. The sequence is that of Follistatin from Mus musculus (Mouse).